A 76-amino-acid chain; its full sequence is Small ribosomal subunit protein bS18 (76 aa).

This sequence belongs to the bacterial ribosomal protein bS18 family. In terms of assembly, part of the 30S ribosomal subunit. Forms a tight heterodimer with protein bS6.

Its function is as follows. Binds as a heterodimer with protein bS6 to the central domain of the 16S rRNA, where it helps stabilize the platform of the 30S subunit. The protein is Small ribosomal subunit protein bS18 of Symbiobacterium thermophilum (strain DSM 24528 / JCM 14929 / IAM 14863 / T).